The sequence spans 214 residues: ATP phosphoribosyltransferase (214 aa).

Belongs to the ATP phosphoribosyltransferase family. Short subfamily. In terms of assembly, heteromultimer composed of HisG and HisZ subunits.

The protein localises to the cytoplasm. The enzyme catalyses 1-(5-phospho-beta-D-ribosyl)-ATP + diphosphate = 5-phospho-alpha-D-ribose 1-diphosphate + ATP. The protein operates within amino-acid biosynthesis; L-histidine biosynthesis; L-histidine from 5-phospho-alpha-D-ribose 1-diphosphate: step 1/9. Catalyzes the condensation of ATP and 5-phosphoribose 1-diphosphate to form N'-(5'-phosphoribosyl)-ATP (PR-ATP). Has a crucial role in the pathway because the rate of histidine biosynthesis seems to be controlled primarily by regulation of HisG enzymatic activity. This chain is ATP phosphoribosyltransferase, found in Leptothrix cholodnii (strain ATCC 51168 / LMG 8142 / SP-6) (Leptothrix discophora (strain SP-6)).